The following is a 285-amino-acid chain: Inositol polyphosphate 1-phosphatase (285 aa).

Mg(2+) is bound by residues E68, D106, L108, and D109. Positions 109, 110, 111, 173, 195, 197, and 200 each coordinate 1D-myo-inositol 1,4-bisphosphate. D223 contacts Mg(2+).

This sequence belongs to the inositol monophosphatase superfamily. In terms of assembly, monomer. It depends on Mg(2+) as a cofactor.

The protein localises to the cytoplasm. It catalyses the reaction 1D-myo-inositol 1,4-bisphosphate + H2O = 1D-myo-inositol 4-phosphate + phosphate. It carries out the reaction adenosine 3',5'-bisphosphate + H2O = AMP + phosphate. Its activity is regulated as follows. Partially inhibited by Li(2+). In terms of biological role, catalyzes the hydrolysis of the 1-position phosphate from inositol 1,4-bisphosphate. Is also able to convert 3'(2')-phosphoadenosine 5'-phosphate (PAP) to AMP but with less efficiency. The sequence is that of Inositol polyphosphate 1-phosphatase from Entamoeba histolytica (strain ATCC 30459 / HM-1:IMSS / ABRM).